The chain runs to 278 residues: Phosphonates import ATP-binding protein PhnC 1 (278 aa).

In terms of domain architecture, ABC transporter spans 5–253; sequence IRVDSLNKTF…FLNELYGAEG (249 aa). 37-44 provides a ligand contact to ATP; the sequence is GASGSGKS.

The protein belongs to the ABC transporter superfamily. Phosphonates importer (TC 3.A.1.9.1) family. In terms of assembly, the complex is composed of two ATP-binding proteins (PhnC), two transmembrane proteins (PhnE) and a solute-binding protein (PhnD).

It localises to the cell inner membrane. It catalyses the reaction phosphonate(out) + ATP + H2O = phosphonate(in) + ADP + phosphate + H(+). Part of the ABC transporter complex PhnCDE involved in phosphonates import. Responsible for energy coupling to the transport system. The sequence is that of Phosphonates import ATP-binding protein PhnC 1 from Pseudomonas aeruginosa (strain UCBPP-PA14).